The following is a 149-amino-acid chain: Calmodulin (149 aa).

Position 2 is an N-acetylalanine (Ala2). EF-hand domains are found at residues 8-43 (EQIAEFKEAFSLFDKDGDGTITTKELGTVMRSLGQN), 44-79 (PTEAELQDMINEVDADGNGTIDFPEFLTMMARKMKD), 81-116 (DSEEEIIEAFKVFDKDGNGFISAAELRHIMTNLGEK), and 117-149 (LTDEEVDEMIREADIDGDGQINYEEFVKMMMAK). Asp21, Asp23, Asp25, Thr27, Glu32, Asp57, Asp59, Asn61, Thr63, Glu68, Asp94, Asp96, Asn98, and Glu105 together coordinate Ca(2+). An N6,N6,N6-trimethyllysine modification is found at Lys116. Ca(2+) contacts are provided by Asp130, Asp132, Asp134, Gln136, and Glu141.

The protein belongs to the calmodulin family.

Its function is as follows. Calmodulin mediates the control of a large number of enzymes, ion channels and other proteins by Ca(2+). Among the enzymes to be stimulated by the calmodulin-Ca(2+) complex are a number of protein kinases and phosphatases. This Macrocystis pyrifera (Giant kelp) protein is Calmodulin.